We begin with the raw amino-acid sequence, 362 residues long: Ferrochelatase (362 aa).

Histidine 228 and glutamate 309 together coordinate Fe cation.

The protein belongs to the ferrochelatase family.

Its subcellular location is the cytoplasm. The enzyme catalyses heme b + 2 H(+) = protoporphyrin IX + Fe(2+). The protein operates within porphyrin-containing compound metabolism; protoheme biosynthesis; protoheme from protoporphyrin-IX: step 1/1. Its function is as follows. Catalyzes the ferrous insertion into protoporphyrin IX. The polypeptide is Ferrochelatase (Bordetella parapertussis (strain 12822 / ATCC BAA-587 / NCTC 13253)).